The following is a 404-amino-acid chain: Cysteine desulfurase IscS (404 aa).

Pyridoxal 5'-phosphate is bound by residues 75 to 76 (AT), N155, Q183, and 203 to 205 (SAH). K206 carries the post-translational modification N6-(pyridoxal phosphate)lysine. T243 contacts pyridoxal 5'-phosphate. The active-site Cysteine persulfide intermediate is the C328. C328 is a [2Fe-2S] cluster binding site.

Belongs to the class-V pyridoxal-phosphate-dependent aminotransferase family. NifS/IscS subfamily. Homodimer. Forms a heterotetramer with IscU, interacts with other sulfur acceptors. The cofactor is pyridoxal 5'-phosphate.

It localises to the cytoplasm. The catalysed reaction is (sulfur carrier)-H + L-cysteine = (sulfur carrier)-SH + L-alanine. Its pathway is cofactor biosynthesis; iron-sulfur cluster biosynthesis. Functionally, master enzyme that delivers sulfur to a number of partners involved in Fe-S cluster assembly, tRNA modification or cofactor biosynthesis. Catalyzes the removal of elemental sulfur atoms from cysteine to produce alanine. Functions as a sulfur delivery protein for Fe-S cluster synthesis onto IscU, an Fe-S scaffold assembly protein, as well as other S acceptor proteins. This chain is Cysteine desulfurase IscS, found in Neisseria meningitidis serogroup A / serotype 4A (strain DSM 15465 / Z2491).